The primary structure comprises 291 residues: tRNA U34 carboxymethyltransferase (291 aa).

Carboxy-S-adenosyl-L-methionine contacts are provided by residues lysine 61, tryptophan 75, lysine 80, glycine 100, 122–124, tyrosine 169, and arginine 284; that span reads DPS.

Belongs to the class I-like SAM-binding methyltransferase superfamily. CmoB family. As to quaternary structure, homotetramer.

The enzyme catalyses carboxy-S-adenosyl-L-methionine + 5-hydroxyuridine(34) in tRNA = 5-carboxymethoxyuridine(34) in tRNA + S-adenosyl-L-homocysteine + H(+). In terms of biological role, catalyzes carboxymethyl transfer from carboxy-S-adenosyl-L-methionine (Cx-SAM) to 5-hydroxyuridine (ho5U) to form 5-carboxymethoxyuridine (cmo5U) at position 34 in tRNAs. This chain is tRNA U34 carboxymethyltransferase, found in Campylobacter lari (strain RM2100 / D67 / ATCC BAA-1060).